The following is a 224-amino-acid chain: Small ribosomal subunit protein uS3 (224 aa).

The 69-residue stretch at 39–107 (IREFLKKKPS…DVWVEIAEVK (69 aa)) folds into the KH type-2 domain.

This sequence belongs to the universal ribosomal protein uS3 family. As to quaternary structure, part of the 30S ribosomal subunit. Forms a tight complex with proteins S10 and S14.

Binds the lower part of the 30S subunit head. Binds mRNA in the 70S ribosome, positioning it for translation. This chain is Small ribosomal subunit protein uS3, found in Chlamydia trachomatis serovar A (strain ATCC VR-571B / DSM 19440 / HAR-13).